The sequence spans 207 residues: Uracil phosphoribosyltransferase (207 aa).

5-phospho-alpha-D-ribose 1-diphosphate contacts are provided by residues Arg77, Arg102, and 129-137 (DPMLATGGS). Uracil is bound by residues Ile192 and 197-199 (GDA). Asp198 is a binding site for 5-phospho-alpha-D-ribose 1-diphosphate.

The protein belongs to the UPRTase family. The cofactor is Mg(2+).

It catalyses the reaction UMP + diphosphate = 5-phospho-alpha-D-ribose 1-diphosphate + uracil. Its pathway is pyrimidine metabolism; UMP biosynthesis via salvage pathway; UMP from uracil: step 1/1. Its activity is regulated as follows. Allosterically activated by GTP. Functionally, catalyzes the conversion of uracil and 5-phospho-alpha-D-ribose 1-diphosphate (PRPP) to UMP and diphosphate. This Mycoplasma mobile (strain ATCC 43663 / 163K / NCTC 11711) (Mesomycoplasma mobile) protein is Uracil phosphoribosyltransferase.